Reading from the N-terminus, the 100-residue chain is Ubiquitin-related modifier 1 homolog (100 aa).

Gly-100 is subject to 1-thioglycine. Residue Gly-100 forms a Glycyl lysine isopeptide (Gly-Lys) (interchain with K-? in acceptor proteins) linkage.

The protein belongs to the URM1 family. C-terminal thiocarboxylation occurs in 2 steps, it is first acyl-adenylated (-COAMP) via the hesA/moeB/thiF part of the MOCS3 homolog, then thiocarboxylated (-COSH) via the rhodanese domain of the MOCS3 homolog.

Its subcellular location is the cytoplasm. The protein operates within tRNA modification; 5-methoxycarbonylmethyl-2-thiouridine-tRNA biosynthesis. Acts as a sulfur carrier required for 2-thiolation of mcm(5)S(2)U at tRNA wobble positions of cytosolic tRNA(Lys), tRNA(Glu) and tRNA(Gln). Serves as sulfur donor in tRNA 2-thiolation reaction by being thiocarboxylated (-COSH) at its C-terminus by MOCS3. The sulfur is then transferred to tRNA to form 2-thiolation of mcm(5)S(2)U. Also acts as a ubiquitin-like protein (UBL) that is covalently conjugated via an isopeptide bond to lysine residues of target proteins. The thiocarboxylated form serves as substrate for conjugation and oxidative stress specifically induces the formation of UBL-protein conjugates. This chain is Ubiquitin-related modifier 1 homolog, found in Oryza sativa subsp. japonica (Rice).